We begin with the raw amino-acid sequence, 49 residues long: Large ribosomal subunit protein bL33C (49 aa).

It belongs to the bacterial ribosomal protein bL33 family.

This is Large ribosomal subunit protein bL33C from Lactococcus lactis subsp. cremoris (strain MG1363).